The chain runs to 378 residues: Putative glutamate--cysteine ligase 2 (378 aa).

Belongs to the glutamate--cysteine ligase type 2 family. YbdK subfamily.

It catalyses the reaction L-cysteine + L-glutamate + ATP = gamma-L-glutamyl-L-cysteine + ADP + phosphate + H(+). Functionally, ATP-dependent carboxylate-amine ligase which exhibits weak glutamate--cysteine ligase activity. The sequence is that of Putative glutamate--cysteine ligase 2 from Leifsonia xyli subsp. xyli (strain CTCB07).